Here is a 491-residue protein sequence, read N- to C-terminus: Keratin, type I cytoskeletal 24 (491 aa).

Positions 1-23 (MFCSAQKGSCSSRVSSSGAVGSR) are disordered. The segment at 1-117 (MFCSAQKGSC…GYDGGLLSGS (117 aa)) is head. Low complexity predominate over residues 8-23 (GSCSSRVSSSGAVGSR). Residues 118–153 (EKQTMQGLNDRLANYLDKVRALEEANTDLETKIKDW) are coil 1A. Residues 118–432 (EKQTMQGLND…RLLNGDGGGC (315 aa)) form the IF rod domain. Residues 154–174 (YGRHGSGKDGPGRDYSQYCSV) are linker 1. The coil 1B stretch occupies residues 175-266 (IEDLKNQIIS…KNHEEEMKCL (92 aa)). The linker 12 stretch occupies residues 267-289 (QGSSGGDVTVEMNATPGTDLTKL). The segment at 290–428 (LNDMRAQYEA…ETYRRLLNGD (139 aa)) is coil 2. Positions 429–491 (GGGCDYRNLV…VSNISEVKIK (63 aa)) are tail.

Belongs to the intermediate filament family. As to quaternary structure, heterotetramer of two type I and two type II keratins.

The protein is Keratin, type I cytoskeletal 24 (Krt24) of Rattus norvegicus (Rat).